We begin with the raw amino-acid sequence, 1006 residues long: MDVRCINWFESHGENRFLYLKSRCRNGETVFIRFPHYFYYVVTDEIYQSLSPPPFNARPMGKMRTIDIDETISYNLDIKDRKCSVADMWLIEEPKKRSIQNATMDEFLNISWFYISNGISPDGCYSLDEQYLTKINNGCYHCDDPRNCFAKEIPRFDIPRSYLFLDIECHFDKKFPSVFINPISHTSYCYIDLSGKRLLFTLINEEMLTEQEIQEAVDRGCLRIQSLMEMDYERELVLCSEIVLLRIAKQLLELTFDYVVTFNGHNFDLRYITNRLELLTGEKIIFRSPDKKEAVHLCIYERNQSSHKGVCGMANTTFHVNNNNGTIFFDLYSFIQKSEKLDSYKLDSISKNAFSCMGKVLNRGVREMTFIGDDTTDAKGKADTFAKVLTTGNYVTVDEDIICKVIRKDILENGFKVVLSCPTLPNDIYKLSFGKDDIDLAQMYKDYNLNIALDMARYCIHDACLCQYLWEYYGVETKTDAGAATYVLPQSMVFEYRASTIIKGPLLKLLLETKTILVRSETKQKFPYEGGKVFAPKQKMFSNNVLIFDYNSLYPNVCIFGNLSPETLVGVVVSTNRLEEEINNQLLLQKYPPPRYITVHCEPRLPNLISEIAIFDRSIEGTIPRLLRTFLAERARYKKMLKQATSSTEKAIYDSMQYTYKIVANSVYGLMGFRNSALYSYASAKSCTSIGRRMILYLESVLNGAELSNGMLRFANTLSNPFYMDDRDINPIVKTSLPIDYRFRFRSVYGDTDSVFTEIDSQDVDKSIEIAKELERLINSRVLFNNFKIEFEAVYKNLIMQSKKKYTTMKYSASSNSKSVPERINKGTSETRRDVSKFHKNMIKTYKTRLSEMLSEGRMNSNQVCIDILRSLETDLRSEFDSRSSPLELFMLSRMHHSNYKSADNPNMYLVTEYNKNNPETIELGERYYFAYICPANVPWTKKLVNIKTYETIIDRSFKLGSNQRIFYEVYFKRLTSEIVNLLDNKVLCISFFQRMFGSRPTFYEA.

The protein belongs to the DNA polymerase type-B family. In terms of assembly, interacts with OPG148. Component of the Uracil-DNA glycosylase(UDG)-OPG148-polymerase complex; OPG148 and OPG116/UDG form a heterodimeric processivity factor that associates with OPG071 to form the processive polymerase holoenzyme.

The catalysed reaction is DNA(n) + a 2'-deoxyribonucleoside 5'-triphosphate = DNA(n+1) + diphosphate. In terms of biological role, catalyzes DNA synthesis. Acquires processivity by associating with a heterodimeric processivity factor comprised of the viral OPG148 and OPG116 proteins, thereby forming the DNA polymerase holoenzyme. Displays 3'- to 5' exonuclease activity. Might participate in viral DNA recombination. Does not perform OPG116/D4synthesis across an abasic site. This chain is DNA polymerase (OPG071), found in Monkeypox virus.